Here is a 250-residue protein sequence, read N- to C-terminus: NAD(P)H-quinone oxidoreductase subunit K (250 aa).

The [4Fe-4S] cluster site is built by Cys-60, Cys-61, Cys-125, and Cys-156. The segment at 230–250 (ELNTSEIDASPASQPSSTYES) is disordered. Residues 231–250 (LNTSEIDASPASQPSSTYES) are compositionally biased toward polar residues.

It belongs to the complex I 20 kDa subunit family. In terms of assembly, NDH-1 can be composed of about 15 different subunits; different subcomplexes with different compositions have been identified which probably have different functions. It depends on [4Fe-4S] cluster as a cofactor.

The protein resides in the cellular thylakoid membrane. The catalysed reaction is a plastoquinone + NADH + (n+1) H(+)(in) = a plastoquinol + NAD(+) + n H(+)(out). The enzyme catalyses a plastoquinone + NADPH + (n+1) H(+)(in) = a plastoquinol + NADP(+) + n H(+)(out). NDH-1 shuttles electrons from an unknown electron donor, via FMN and iron-sulfur (Fe-S) centers, to quinones in the respiratory and/or the photosynthetic chain. The immediate electron acceptor for the enzyme in this species is believed to be plastoquinone. Couples the redox reaction to proton translocation, and thus conserves the redox energy in a proton gradient. Cyanobacterial NDH-1 also plays a role in inorganic carbon-concentration. This Prochlorococcus marinus (strain MIT 9303) protein is NAD(P)H-quinone oxidoreductase subunit K.